Reading from the N-terminus, the 333-residue chain is Glycerol-3-phosphate dehydrogenase [NAD(P)+] (333 aa).

The NADPH site is built by tryptophan 13, lysine 33, and lysine 108. The sn-glycerol 3-phosphate site is built by lysine 108 and glycine 138. Residue serine 142 coordinates NADPH. 5 residues coordinate sn-glycerol 3-phosphate: lysine 193, aspartate 246, serine 256, arginine 257, and asparagine 258. The active-site Proton acceptor is the lysine 193. Arginine 257 is a binding site for NADPH. 2 residues coordinate NADPH: valine 281 and glutamate 283.

It belongs to the NAD-dependent glycerol-3-phosphate dehydrogenase family.

The protein resides in the cytoplasm. The catalysed reaction is sn-glycerol 3-phosphate + NAD(+) = dihydroxyacetone phosphate + NADH + H(+). It catalyses the reaction sn-glycerol 3-phosphate + NADP(+) = dihydroxyacetone phosphate + NADPH + H(+). Its pathway is membrane lipid metabolism; glycerophospholipid metabolism. Catalyzes the reduction of the glycolytic intermediate dihydroxyacetone phosphate (DHAP) to sn-glycerol 3-phosphate (G3P), the key precursor for phospholipid synthesis. The chain is Glycerol-3-phosphate dehydrogenase [NAD(P)+] from Bifidobacterium longum subsp. infantis (strain ATCC 15697 / DSM 20088 / JCM 1222 / NCTC 11817 / S12).